We begin with the raw amino-acid sequence, 934 residues long: Serine/threonine-protein kinase atg1 (934 aa).

The Protein kinase domain maps to 22–328; that stretch reads YTRLDEIGRG…SDFFDCDTIT (307 aa). ATP-binding positions include 28-36 and lysine 51; that span reads IGRGSFATV. Residue aspartate 165 is the Proton acceptor of the active site. Disordered regions lie at residues 335-432, 462-481, 531-580, 684-703, 800-822, and 878-900; these read IADD…PRRP, RNTYAGVPQTEKQAEKTKEE, RRPG…YGQS, TDPSGRANVPGGERDSTDLT, RLPPDHPSHPSNHSVGPSVGSGA, and EEEEVSRSEPGSGTDRGDARRDG. Over residues 340–368 the composition is skewed to polar residues; sequence PSTSRRSSVAVNTSGSTSRPQSRTGSRTP. Over residues 371–386 the composition is skewed to basic and acidic residues; it reads MKREKDASYPGKKDDQ. The span at 538–550 shows a compositional bias: low complexity; sequence SSTATATSPLATT. Basic and acidic residues predominate over residues 561-577; it reads ARADSTHTRQGSYERRY.

The protein belongs to the protein kinase superfamily. Ser/Thr protein kinase family. APG1/unc-51/ULK1 subfamily. Homodimer. Forms a ternary complex with ATG13 and ATG17.

Its subcellular location is the cytoplasm. It localises to the preautophagosomal structure membrane. The catalysed reaction is L-seryl-[protein] + ATP = O-phospho-L-seryl-[protein] + ADP + H(+). The enzyme catalyses L-threonyl-[protein] + ATP = O-phospho-L-threonyl-[protein] + ADP + H(+). Serine/threonine protein kinase involved in the cytoplasm to vacuole transport (Cvt) and found to be essential in autophagy, where it is required for the formation of autophagosomes. Involved in the clearance of protein aggregates which cannot be efficiently cleared by the proteasome. Required for selective autophagic degradation of the nucleus (nucleophagy) as well as for mitophagy which contributes to regulate mitochondrial quantity and quality by eliminating the mitochondria to a basal level to fulfill cellular energy requirements and preventing excess ROS production. Also involved in endoplasmic reticulum-specific autophagic process, in selective removal of ER-associated degradation (ERAD) substrates. Plays a key role in ATG9 and ATG23 cycling through the pre-autophagosomal structure and is necessary to promote ATG18 binding to ATG9 through phosphorylation of ATG9. Catalyzes phosphorylation of ATG4, decreasing the interaction between ATG4 and ATG8 and impairing deconjugation of PE-conjugated forms of ATG8. Required for conidiation and development of aerial hyphae. The polypeptide is Serine/threonine-protein kinase atg1 (Aspergillus oryzae (strain ATCC 42149 / RIB 40) (Yellow koji mold)).